A 138-amino-acid polypeptide reads, in one-letter code: Transcription antitermination protein NusB (138 aa).

This sequence belongs to the NusB family.

Its function is as follows. Involved in transcription antitermination. Required for transcription of ribosomal RNA (rRNA) genes. Binds specifically to the boxA antiterminator sequence of the ribosomal RNA (rrn) operons. The chain is Transcription antitermination protein NusB from Geobacter sulfurreducens (strain ATCC 51573 / DSM 12127 / PCA).